Reading from the N-terminus, the 388-residue chain is Succinate--CoA ligase [ADP-forming] subunit beta (388 aa).

One can recognise an ATP-grasp domain in the interval 9–244; it reads KQLFARYGLP…QSQEDPREAQ (236 aa). ATP is bound by residues lysine 46, 53 to 55, glutamate 99, threonine 102, and glutamate 107; that span reads GRG. Positions 199 and 213 each coordinate Mg(2+). Residues asparagine 264 and 321–323 each bind substrate; that span reads GIV.

This sequence belongs to the succinate/malate CoA ligase beta subunit family. In terms of assembly, heterotetramer of two alpha and two beta subunits. Mg(2+) serves as cofactor.

It catalyses the reaction succinate + ATP + CoA = succinyl-CoA + ADP + phosphate. It carries out the reaction GTP + succinate + CoA = succinyl-CoA + GDP + phosphate. Its pathway is carbohydrate metabolism; tricarboxylic acid cycle; succinate from succinyl-CoA (ligase route): step 1/1. Functionally, succinyl-CoA synthetase functions in the citric acid cycle (TCA), coupling the hydrolysis of succinyl-CoA to the synthesis of either ATP or GTP and thus represents the only step of substrate-level phosphorylation in the TCA. The beta subunit provides nucleotide specificity of the enzyme and binds the substrate succinate, while the binding sites for coenzyme A and phosphate are found in the alpha subunit. The protein is Succinate--CoA ligase [ADP-forming] subunit beta of Escherichia coli O8 (strain IAI1).